The primary structure comprises 185 residues: MAEAKYEPRLKKEYVERIRKAMQEKFSYANEMMIPKLDKIVINMGVGEATADSKKPTVAAADLAAIAGQKPVITRARNSIAGFKVRENMPIGAKVTLRGARMYEFLDRLVNIALPRVRDFRGLNPKSFDGRGNFAMGIKEHIVFPEINYDKVDQMWGMDIIVCTTATTDDEARALLKEFSFPFRQ.

It belongs to the universal ribosomal protein uL5 family. As to quaternary structure, part of the 50S ribosomal subunit; part of the 5S rRNA/L5/L18/L25 subcomplex. Contacts the 5S rRNA and the P site tRNA. Forms a bridge to the 30S subunit in the 70S ribosome.

Functionally, this is one of the proteins that bind and probably mediate the attachment of the 5S RNA into the large ribosomal subunit, where it forms part of the central protuberance. In the 70S ribosome it contacts protein S13 of the 30S subunit (bridge B1b), connecting the 2 subunits; this bridge is implicated in subunit movement. Contacts the P site tRNA; the 5S rRNA and some of its associated proteins might help stabilize positioning of ribosome-bound tRNAs. This Rhizobium etli (strain CIAT 652) protein is Large ribosomal subunit protein uL5.